Reading from the N-terminus, the 365-residue chain is Phosphoserine aminotransferase (365 aa).

Arginine 42 is an L-glutamate binding site. Pyridoxal 5'-phosphate contacts are provided by residues 76–77 (AR), tryptophan 103, threonine 154, aspartate 175, and glutamine 198. Lysine 199 is subject to N6-(pyridoxal phosphate)lysine. Residue 242–243 (NT) participates in pyridoxal 5'-phosphate binding.

It belongs to the class-V pyridoxal-phosphate-dependent aminotransferase family. SerC subfamily. Homodimer. Requires pyridoxal 5'-phosphate as cofactor.

Its subcellular location is the cytoplasm. It catalyses the reaction O-phospho-L-serine + 2-oxoglutarate = 3-phosphooxypyruvate + L-glutamate. The catalysed reaction is 4-(phosphooxy)-L-threonine + 2-oxoglutarate = (R)-3-hydroxy-2-oxo-4-phosphooxybutanoate + L-glutamate. It participates in amino-acid biosynthesis; L-serine biosynthesis; L-serine from 3-phospho-D-glycerate: step 2/3. It functions in the pathway cofactor biosynthesis; pyridoxine 5'-phosphate biosynthesis; pyridoxine 5'-phosphate from D-erythrose 4-phosphate: step 3/5. Catalyzes the reversible conversion of 3-phosphohydroxypyruvate to phosphoserine and of 3-hydroxy-2-oxo-4-phosphonooxybutanoate to phosphohydroxythreonine. This is Phosphoserine aminotransferase from Blochmanniella floridana.